Reading from the N-terminus, the 525-residue chain is Cytochrome P450 4V2 (525 aa).

The chain crosses the membrane as a helical span at residues 14–34 (LLWGAASAVSLAGATILISIF). Heme contacts are provided by Glu329 and Cys467.

The protein belongs to the cytochrome P450 family. Requires heme as cofactor.

It localises to the endoplasmic reticulum membrane. It catalyses the reaction dodecanoate + reduced [NADPH--hemoprotein reductase] + O2 = 12-hydroxydodecanoate + oxidized [NADPH--hemoprotein reductase] + H2O + H(+). The catalysed reaction is tetradecanoate + reduced [NADPH--hemoprotein reductase] + O2 = 14-hydroxytetradecanoate + oxidized [NADPH--hemoprotein reductase] + H2O + H(+). It carries out the reaction hexadecanoate + reduced [NADPH--hemoprotein reductase] + O2 = 16-hydroxyhexadecanoate + oxidized [NADPH--hemoprotein reductase] + H2O + H(+). The enzyme catalyses (5Z,8Z,11Z,14Z,17Z)-eicosapentaenoate + reduced [NADPH--hemoprotein reductase] + O2 = 20-hydroxy-(5Z,8Z,11Z,14Z,17Z)-eicosapentaenoate + oxidized [NADPH--hemoprotein reductase] + H2O + H(+). It catalyses the reaction (4Z,7Z,10Z,13Z,16Z,19Z)-docosahexaenoate + reduced [NADPH--hemoprotein reductase] + O2 = 22-hydroxy-(4Z,7Z,10Z,13Z,16Z,19Z)-docosahexaenoate + oxidized [NADPH--hemoprotein reductase] + H2O + H(+). It participates in lipid metabolism; fatty acid metabolism. Inhibited by N-hydroxy-N'-(4-n-butyl-2-methylphenyl formamidine)(HET0016) with an IC(50) of 38 nM. Functionally, a cytochrome P450 monooxygenase involved in fatty acid metabolism in the eye. Catalyzes the omega-hydroxylation of polyunsaturated fatty acids (PUFAs) docosahexaenoate (DHA) and its precursor eicosapentaenoate (EPA), and may contribute to the homeostasis of these retinal PUFAs. Omega hydroxylates saturated fatty acids such as laurate, myristate and palmitate, the catalytic efficiency decreasing in the following order: myristate &gt; laurate &gt; palmitate (C14&gt;C12&gt;C16). Mechanistically, uses molecular oxygen inserting one oxygen atom into a substrate, and reducing the second into a water molecule, with two electrons provided by NADPH via cytochrome P450 reductase (CPR; NADPH-ferrihemoprotein reductase). The polypeptide is Cytochrome P450 4V2 (Cyp4v2) (Mus musculus (Mouse)).